Reading from the N-terminus, the 912-residue chain is Metabotropic glutamate receptor 4 (912 aa).

The N-terminal stretch at 1 to 32 is a signal peptide; the sequence is MPGKSGLGWWWARLPLCLLLSLYGPWMPSSLG. Topologically, residues 33-586 are extracellular; that stretch reads KPKGHPHMNS…PIIKLEWDSP (554 aa). C67 and C109 form a disulfide bridge. N98 is a glycosylation site (N-linked (GlcNAc...) asparagine). L-glutamate contacts are provided by residues S159, 180 to 182, and Y230; that span reads AST. 7 disulfide bridges follow: C249/C538, C372/C388, C428/C435, C520/C539, C524/C542, C545/C557, and C560/C573. A glycan (N-linked (GlcNAc...) asparagine) is linked at N301. D312 lines the L-glutamate pocket. K405 contributes to the L-glutamate binding site. N-linked (GlcNAc...) asparagine glycosylation is found at N454 and N484. An N-linked (GlcNAc...) asparagine glycan is attached at N569. A helical membrane pass occupies residues 587 to 607; that stretch reads WAVLPLFLAVVGIAATLFVVI. Residues 608–624 are Cytoplasmic-facing; sequence TFVRYNDTPIVKASGRE. The helical transmembrane segment at 625 to 645 threads the bilayer; sequence LSYVLLAGIFLCYATTFLMIA. Over 646-653 the chain is Extracellular; sequence EPDLGTCS. Residues 654–671 form a helical membrane-spanning segment; sequence LRRIFLGLGMSISYAALL. Over 672–699 the chain is Cytoplasmic; the sequence is TKTNRIYRIFEQGKRSVSAPRFISPASQ. A helical membrane pass occupies residues 700-720; sequence LAITFSLISLQLLGICVWFVV. Over 721 to 751 the chain is Extracellular; the sequence is DPSHSVVDFQDQRTLDPRFARGVLKCDISDL. The helical transmembrane segment at 752–772 threads the bilayer; sequence SLICLLGYSMLLMVTCTVYAI. Over 773 to 786 the chain is Cytoplasmic; the sequence is KTRGVPETFNEAKP. Residues 787–807 traverse the membrane as a helical segment; it reads IGFTMYTTCIVWLAFIPIFFG. Residues 808–826 are Extracellular-facing; sequence TSQSADKLYIQTTTLTVSV. A helical transmembrane segment spans residues 827 to 847; that stretch reads SLSASVSLGMLYMPKVYIILF. The Cytoplasmic portion of the chain corresponds to 848–912; sequence HPEQNVPKRK…TYVTYTNHAI (65 aa).

Belongs to the G-protein coupled receptor 3 family. Interacts with PICK1.

It localises to the cell membrane. G-protein coupled receptor for glutamate. Ligand binding causes a conformation change that triggers signaling via guanine nucleotide-binding proteins (G proteins) and modulates the activity of down-stream effectors. Signaling inhibits adenylate cyclase activity. This chain is Metabotropic glutamate receptor 4 (GRM4), found in Macaca fascicularis (Crab-eating macaque).